Consider the following 431-residue polypeptide: MKSVIIQGLFCGFLAIGLWASMLLLFLHLEQEDMLENEKEELLKKRSLGKNAHQQTRHSEDVTHDEVNFSDPELIQGLRRYGLNAIMSRRLGIEREVPDSRDKICQQKHYPFNLPTASIIICFYNEEFNTLLRAVSSVVNLSPQHLLEEIILVDDMSEFDDLKDKLDYYLEIFRGKVKLIRNKKREGLIRSKMIGASRASGDILVFLDSHCEVNRVWLEPLLHAIAKDHKMVVCPIIDVINELTLDYMAAPIVRGAFDWNLNLRWDNVFAYELDGPEGPSTPIRSPAMTGGIFAINRHYFNELGQYDNGMDICGGENVELSLRIWMCGGQLFILPCSRVGYNSKALSQHRRANQSALSRNLLRVVHVWLDEYKGNFFLQRPSLTYVSCGNISERVELRKRLGCKSFQWYLDNIFPELEPFNTERKRKKNRF.

Residues Met1 to Val4 are Cytoplasmic-facing. A helical; Signal-anchor for type II membrane protein transmembrane segment spans residues Ile5 to Leu27. Over His28 to Phe431 the chain is Lumenal. Asn68 carries an N-linked (GlcNAc...) asparagine glycan. Intrachain disulfides connect Cys105-Cys336 and Cys327-Cys403. The interval Leu114–Ala224 is catalytic subdomain A. The catalytic subdomain B stretch occupies residues Pro282 to Lys344. N-linked (GlcNAc...) asparagine glycans are attached at residues Asn353 and Asn390.

The protein belongs to the glycosyltransferase 2 family. GalNAc-T subfamily. Mn(2+) is required as a cofactor. In terms of tissue distribution, expressed in testis. Mainly expressed in the round and elongated spermatids during spermiogenesis, not in the outermost cells of the seminiferous tubules, which contain spermatogonia and somatic Sertoli cells. Present in the juxtanuclear space in the round spermatids, not in the acrosomal vesicles. In the elongating spermatids, localizes strongly in the acroplaxome, the region between the developing acrosome and nucleus. During differentiation, also weakly detected in the transient manchette containing microtubules. In epididymal spermatozoa, weakly detected in the midpiece, but concentrates mainly in the neck region around the head-tail coupling apparatus (at protein level).

It localises to the late endosome membrane. Probable inactive glycosyltransferase required during spermatid development. May participate in protein loading into the acrosomes and accumulation of ubiquitin-proteasome systems around the head-tail coupling apparatus region. This is Inactive polypeptide N-acetylgalactosaminyltransferase-like protein 5 (Galntl5) from Mus musculus (Mouse).